The chain runs to 1241 residues: Interphotoreceptor matrix proteoglycan 2 (1241 aa).

A signal peptide spans 1–22 (MIMFPLFGKISLGILIFVLIEG). Topologically, residues 23-1099 (DFPSLTAQTY…KHCEEFVSEP (1077 aa)) are extracellular. N-linked (GlcNAc...) asparagine glycosylation occurs at N154. Residues 180 to 223 (ELSSPVPVGDTSTLGDTTLSVPHPEVDAYEGASESSLERPEESI) form a disordered region. Residues 189-199 (DTSTLGDTTLS) are compositionally biased toward polar residues. Residues T190 and T192 are each glycosylated (O-linked (GalNAc...) threonine). The SEA 1 domain occupies 239–353 (GEQIAEFSIH…KPTVVYTISN (115 aa)). The segment at 259–267 (QDSSSFHHQ) is hyaluronan-binding motif involved in chondroitin sulfate A-binding. N-linked (GlcNAc...) asparagine glycans are attached at residues N301, N320, and N370. O-linked (GalNAc...) threonine glycosylation is found at T544 and T556. Basic and acidic residues predominate over residues 660 to 678 (QISKHSKYEHDDRSTHFPE). The tract at residues 660–684 (QISKHSKYEHDDRSTHFPEEEPLSG) is disordered. The SEA 2 domain maps to 897-1010 (GALVVFFSLR…YSLDVESGDE (114 aa)). N942 and N956 each carry an N-linked (GlcNAc...) asparagine glycan. EGF-like domains lie at 1010 to 1051 (EANP…RPCQ) and 1052 to 1093 (SLCD…KHCE). 6 cysteine pairs are disulfide-bonded: C1014-C1025, C1019-C1036, C1038-C1050, C1054-C1067, C1061-C1077, and C1079-C1092. Residues 1080-1088 (RVGENWWYR) are hyaluronan-binding motif involved in chondroitin sulfate C-binding. A helical transmembrane segment spans residues 1100 to 1120 (VIIGITIASVVGLLVIFSAII). At 1121–1241 (YFFIRTLQAH…FVREQQVEEV (121 aa)) the chain is on the cytoplasmic side. The segment at 1125 to 1133 (RTLQAHHDR) is hyaluronan-binding motif involved in chondroitin sulfate A- and C-binding. Residues 1136–1145 (RESPFSGSSR) form a hyaluronan-binding motif involved in chondroitin sulfate C-binding region. The interval 1210–1218 (REEIQERMR) is hyaluronan-binding motif involved in chondroitin sulfate A- and C-binding motif.

Highly glycosylated (N- and O-linked carbohydrates). As to expression, expressed in the retina (at protein level). Expressed by photoreceptors of the interphotoreceptor matrix (IPM) surrounding both rods and cones (at protein level). IPM occupies the subretinal space between the apices of the retinal pigment epithelium and the neural retina. Expressed in the pineal gland (at protein level).

It is found in the photoreceptor outer segment membrane. The protein localises to the photoreceptor inner segment membrane. The protein resides in the secreted. It localises to the extracellular space. Its subcellular location is the extracellular matrix. It is found in the interphotoreceptor matrix. Functionally, chondroitin sulfate- and hyaluronan-binding proteoglycan involved in the organization of interphotoreceptor matrix; may participate in the maturation and maintenance of the light-sensitive photoreceptor outer segment. Binds heparin. The sequence is that of Interphotoreceptor matrix proteoglycan 2 (IMPG2) from Homo sapiens (Human).